Consider the following 102-residue polypeptide: Small ribosomal subunit protein uS10 (102 aa).

It belongs to the universal ribosomal protein uS10 family. Part of the 30S ribosomal subunit.

Its function is as follows. Involved in the binding of tRNA to the ribosomes. The protein is Small ribosomal subunit protein uS10 of Streptococcus mutans serotype c (strain ATCC 700610 / UA159).